A 177-amino-acid chain; its full sequence is ATP-dependent protease subunit HslV (177 aa).

Thr6 is a catalytic residue. The Na(+) site is built by Ser161, Cys164, and Thr167.

This sequence belongs to the peptidase T1B family. HslV subfamily. As to quaternary structure, a double ring-shaped homohexamer of HslV is capped on each side by a ring-shaped HslU homohexamer. The assembly of the HslU/HslV complex is dependent on binding of ATP.

The protein localises to the cytoplasm. It carries out the reaction ATP-dependent cleavage of peptide bonds with broad specificity.. With respect to regulation, allosterically activated by HslU binding. Its function is as follows. Protease subunit of a proteasome-like degradation complex believed to be a general protein degrading machinery. The chain is ATP-dependent protease subunit HslV from Thermodesulfovibrio yellowstonii (strain ATCC 51303 / DSM 11347 / YP87).